Here is a 126-residue protein sequence, read N- to C-terminus: Glycine cleavage system H protein (126 aa).

Residues 21-103 (TVTVGISDHA…YESGWIARIK (83 aa)) form the Lipoyl-binding domain. At Lys62 the chain carries N6-lipoyllysine.

It belongs to the GcvH family. As to quaternary structure, the glycine cleavage system is composed of four proteins: P, T, L and H. Requires (R)-lipoate as cofactor.

In terms of biological role, the glycine cleavage system catalyzes the degradation of glycine. The H protein shuttles the methylamine group of glycine from the P protein to the T protein. This Aliivibrio fischeri (strain MJ11) (Vibrio fischeri) protein is Glycine cleavage system H protein.